The primary structure comprises 68 residues: Palustrin-1c (68 aa).

The signal sequence occupies residues methionine 1–cysteine 22. Residues glutamate 23–threonine 39 constitute a propeptide that is removed on maturation. A disulfide bond links cysteine 62 and cysteine 68.

As to expression, expressed by the skin glands.

It localises to the secreted. In terms of biological role, antimicrobial activity against Gram-negative bacterium E.coli. Stimulates insulin release. This is Palustrin-1c from Lithobates palustris (Pickerel frog).